The sequence spans 129 residues: Protein RALF-like 34 (129 aa).

The N-terminal stretch at 1–23 is a signal peptide; sequence MAASSLNLLLILSLLTFISLQRS. Positions 24–76 are cleaved as a propeptide — removed in mature form; that stretch reads ESLSDNPSLTLLPDGFDWPISHSDEFDIIDGEESFEVTEEDDGVTDRRSLYWR. Cystine bridges form between C94-C107 and C121-C127.

Belongs to the plant rapid alkalinization factor (RALF) family. Post-translationally, proteolytically cleaved, probably by S1P, a subtilisin-like serine protease (subtilase). In terms of tissue distribution, expressed in roots, stems and leaves.

Its subcellular location is the secreted. Cell signaling peptide that may regulate plant stress, growth, and development. Mediates a rapid alkalinization of extracellular space by mediating a transient increase in the cytoplasmic Ca(2+) concentration leading to a calcium-dependent signaling events through a cell surface receptor and a concomitant activation of some intracellular mitogen-activated protein kinases. This is Protein RALF-like 34 (RALFL34) from Arabidopsis thaliana (Mouse-ear cress).